A 394-amino-acid polypeptide reads, in one-letter code: Probable pectate lyase 16 (394 aa).

The first 22 residues, 1–22 (MTLFTVSCLLVVLFLCHSLVHA), serve as a signal peptide directing secretion. 3 residues coordinate Ca(2+): aspartate 192, aspartate 216, and aspartate 220. The active site involves arginine 272.

The protein belongs to the polysaccharide lyase 1 family. The cofactor is Ca(2+).

The catalysed reaction is Eliminative cleavage of (1-&gt;4)-alpha-D-galacturonan to give oligosaccharides with 4-deoxy-alpha-D-galact-4-enuronosyl groups at their non-reducing ends.. It functions in the pathway glycan metabolism; pectin degradation; 2-dehydro-3-deoxy-D-gluconate from pectin: step 2/5. The polypeptide is Probable pectate lyase 16 (Arabidopsis thaliana (Mouse-ear cress)).